A 20-amino-acid polypeptide reads, in one-letter code: KDGYLVGNDGCKYSCNTYPK.

The region spanning 1–20 is the LCN-type CS-alpha/beta domain; the sequence is KDGYLVGNDGCKYSCNTYPK.

The protein belongs to the long (4 C-C) scorpion toxin superfamily. Sodium channel inhibitor family. Beta subfamily. In terms of tissue distribution, expressed by the venom gland.

It localises to the secreted. Functionally, beta toxins bind voltage-independently at site-4 of sodium channels (Nav) and shift the voltage of activation toward more negative potentials thereby affecting sodium channel activation and promoting spontaneous and repetitive firing. This Tityus pachyurus (Colombian scorpion) protein is Toxin TpF21-Cocle.